Here is a 314-residue protein sequence, read N- to C-terminus: tRNA dimethylallyltransferase (314 aa).

10–17 is an ATP binding site; that stretch reads GPTAVGKT. A substrate-binding site is contributed by 12–17; that stretch reads TAVGKT. Positions 35–38 are interaction with substrate tRNA; sequence DSMQ.

This sequence belongs to the IPP transferase family. Monomer. Requires Mg(2+) as cofactor.

It catalyses the reaction adenosine(37) in tRNA + dimethylallyl diphosphate = N(6)-dimethylallyladenosine(37) in tRNA + diphosphate. In terms of biological role, catalyzes the transfer of a dimethylallyl group onto the adenine at position 37 in tRNAs that read codons beginning with uridine, leading to the formation of N6-(dimethylallyl)adenosine (i(6)A). This is tRNA dimethylallyltransferase from Clostridium novyi (strain NT).